The chain runs to 97 residues: uncharacterized protein (97 aa).

This is an uncharacterized protein from Schizosaccharomyces pombe (strain 972 / ATCC 24843) (Fission yeast).